We begin with the raw amino-acid sequence, 377 residues long: Putative F-box protein At3g13830 (377 aa).

In terms of domain architecture, F-box spans Thr6–Ala52.

The polypeptide is Putative F-box protein At3g13830 (Arabidopsis thaliana (Mouse-ear cress)).